We begin with the raw amino-acid sequence, 124 residues long: Small ribosomal subunit protein uS12 (124 aa).

The tract at residues 1-23 (MATINQLVRKPRVRQKQKSNVPA) is disordered. The residue at position 89 (Asp-89) is a 3-methylthioaspartic acid. The tract at residues 103-124 (DTAGVGDRRQGRSKYGAKRPKG) is disordered. The span at 113–124 (GRSKYGAKRPKG) shows a compositional bias: basic residues.

This sequence belongs to the universal ribosomal protein uS12 family. As to quaternary structure, part of the 30S ribosomal subunit. Contacts proteins S8 and S17. May interact with IF1 in the 30S initiation complex.

Functionally, with S4 and S5 plays an important role in translational accuracy. In terms of biological role, interacts with and stabilizes bases of the 16S rRNA that are involved in tRNA selection in the A site and with the mRNA backbone. Located at the interface of the 30S and 50S subunits, it traverses the body of the 30S subunit contacting proteins on the other side and probably holding the rRNA structure together. The combined cluster of proteins S8, S12 and S17 appears to hold together the shoulder and platform of the 30S subunit. This is Small ribosomal subunit protein uS12 from Nitrosococcus oceani (strain ATCC 19707 / BCRC 17464 / JCM 30415 / NCIMB 11848 / C-107).